Consider the following 127-residue polypeptide: Translation initiation factor 5A (127 aa).

Hypusine is present on lysine 35.

Belongs to the eIF-5A family.

The protein resides in the cytoplasm. Functions by promoting the formation of the first peptide bond. This Methanospirillum hungatei JF-1 (strain ATCC 27890 / DSM 864 / NBRC 100397 / JF-1) protein is Translation initiation factor 5A.